We begin with the raw amino-acid sequence, 383 residues long: MFVYYCKECFIMNKQQSKVRYSIRKVSIGILSISIGMFLALGMSNKAYADEIDKSKDFTRGYEQNVFAKSELNANKNTTKDKIKNEGAVKTSDTSLKLDNKSAISNGNEINQDIKISNTPKNSSQGNNLVINNNELTKEIKIANLEAQNSNQKKTNKVTNNYFGYYSFREAPKTQIYTVKKGDTLSAIALKYKTTVSNIQNTNNIANPNLIFIGQKLKVPMTPLVEPKPKTVSSNNKSNSNSSTLNYLKTLENRGWDFDGSYGWQCFDLVNVYWNHLYGHGLKGYGAKDIPYANNFNSEAKIYHNTPTFKAEPGDLVVFSGRFGGGYGHTAIVLNGDYDGKLMKFQSLDQNWNNGGWRKAEVAHKVVHNYENDMIFIRPFKKA.

The first 49 residues, 1–49, serve as a signal peptide directing secretion; that stretch reads MFVYYCKECFIMNKQQSKVRYSIRKVSIGILSISIGMFLALGMSNKAYA. The region spanning 175 to 219 is the LysM domain; sequence QIYTVKKGDTLSAIALKYKTTVSNIQNTNNIANPNLIFIGQKLKV. The 138-residue stretch at 241 to 378 folds into the Peptidase C51 domain; sequence NSSTLNYLKT…NYENDMIFIR (138 aa).

Its subcellular location is the secreted. Its function is as follows. Probably involved in peptidoglycan hydrolysis. In Staphylococcus aureus (strain NCTC 8325 / PS 47), this protein is Probable cell wall hydrolase LytN (lytN).